A 96-amino-acid polypeptide reads, in one-letter code: Essential MCU regulator, mitochondrial (96 aa).

Residues 1–34 constitute a mitochondrion transit peptide; it reads MIVSRLTFPLQAAKLVARKAAGNPSNSIIQRRHM. Residues 52–72 traverse the membrane as a helical segment; that stretch reads PFGLFAIFCAVIPGLFIGATI.

Belongs to the SMDT1/EMRE family.

The protein localises to the mitochondrion inner membrane. In terms of biological role, essential regulatory subunit of the mitochondrial calcium uniporter (mcu) channel, a protein that mediates calcium uptake into mitochondria. This chain is Essential MCU regulator, mitochondrial, found in Drosophila pseudoobscura pseudoobscura (Fruit fly).